We begin with the raw amino-acid sequence, 29 residues long: Beta-hexatoxin-Mr1a (29 aa).

3 cysteine pairs are disulfide-bonded: cysteine 2–cysteine 16, cysteine 9–cysteine 21, and cysteine 15–cysteine 26.

This sequence belongs to the neurotoxin 15 family. 01 (magi-5) subfamily. In terms of tissue distribution, expressed by the venom gland.

The protein resides in the secreted. In terms of biological role, insect and vertebrate active toxin. Binds at site 4 of mammalian voltage-gated sodium channels and shifts the activation voltage of the mammalian rNav1.2a (SCN2A) channel to more hyperpolarized voltages, whereas the insect channel, DmNav1 (para), is not affected. Causes temporary paralysis when injected into lepidopteran larvae at 8.6 nmol/g. A low intracranial injection dose into mice causes lacrimation, closure of the eyes and sweating. A high injection dose causes extensive lacrimation and death. The protein is Beta-hexatoxin-Mr1a of Macrothele raveni (Funnel-web spider).